An 874-amino-acid polypeptide reads, in one-letter code: Chaperone protein ClpB 1 (874 aa).

Positions Pro-6–Ser-148 constitute a Clp R domain. Repeat stretches follow at residues Phe-9–Gln-73 and Leu-85–Ser-148. The tract at residues Glu-161–Gln-342 is NBD1. Residue Gly-208–Thr-215 participates in ATP binding. Residues Pro-343–Gly-551 are linker. Residues Ile-393 to Thr-527 adopt a coiled-coil conformation. An NBD2 region spans residues Glu-561 to Ser-772. Position 611 to 618 (Gly-611 to Thr-618) interacts with ATP. A C-terminal region spans residues Leu-773 to Ser-874.

It belongs to the ClpA/ClpB family. Homohexamer. The oligomerization is ATP-dependent.

The protein resides in the cytoplasm. Its function is as follows. Part of a stress-induced multi-chaperone system, it is involved in the recovery of the cell from heat-induced damage, in cooperation with DnaK, DnaJ and GrpE. Acts before DnaK, in the processing of protein aggregates. Protein binding stimulates the ATPase activity; ATP hydrolysis unfolds the denatured protein aggregates, which probably helps expose new hydrophobic binding sites on the surface of ClpB-bound aggregates, contributing to the solubilization and refolding of denatured protein aggregates by DnaK. Necessary for thermotolerance. This chain is Chaperone protein ClpB 1 (clpB1), found in Synechococcus elongatus (strain ATCC 33912 / PCC 7942 / FACHB-805) (Anacystis nidulans R2).